The sequence spans 149 residues: Ribonuclease P protein component (149 aa).

Residues G123–G149 form a disordered region. Residues P139–G149 show a composition bias toward polar residues.

The protein belongs to the RnpA family. As to quaternary structure, consists of a catalytic RNA component (M1 or rnpB) and a protein subunit.

It carries out the reaction Endonucleolytic cleavage of RNA, removing 5'-extranucleotides from tRNA precursor.. Its function is as follows. RNaseP catalyzes the removal of the 5'-leader sequence from pre-tRNA to produce the mature 5'-terminus. It can also cleave other RNA substrates such as 4.5S RNA. The protein component plays an auxiliary but essential role in vivo by binding to the 5'-leader sequence and broadening the substrate specificity of the ribozyme. The chain is Ribonuclease P protein component from Caulobacter vibrioides (strain ATCC 19089 / CIP 103742 / CB 15) (Caulobacter crescentus).